Reading from the N-terminus, the 434-residue chain is Glutamine synthetase leaf isozyme, chloroplastic (434 aa).

2 disordered regions span residues 1 to 33 (MQVRRDDDGAGGCAGDAVPGGGEGQDGVPARQP) and 101 to 126 (TISKPVEDPSELPKWNYDGSSTGQAP). The N-terminal 54 residues, 1–54 (MQVRRDDDGAGGCAGDAVPGGGEGQDGVPARQPAGRVWGVSRAARATSGFKVLA), are a transit peptide targeting the chloroplast. Residues 10–25 (AGGCAGDAVPGGGEGQ) show a composition bias toward gly residues. A GS beta-grasp domain is found at 81–161 (IIAEYIWVGG…VICDTYTPQG (81 aa)). In terms of domain architecture, GS catalytic spans 168–434 (KRHMAAQIFS…LAAKKLALKV (267 aa)).

This sequence belongs to the glutamine synthetase family. Homooctamer.

The protein resides in the plastid. It localises to the chloroplast. It carries out the reaction L-glutamate + NH4(+) + ATP = L-glutamine + ADP + phosphate + H(+). The light-modulated chloroplast enzyme, encoded by a nuclear gene and expressed primarily in leaves, is responsible for the reassimilation of the ammonia generated by photorespiration. In Hordeum vulgare (Barley), this protein is Glutamine synthetase leaf isozyme, chloroplastic.